The primary structure comprises 184 residues: ATP-dependent protease subunit HslV (184 aa).

Residue threonine 11 is part of the active site. Positions 165, 168, and 171 each coordinate Na(+).

The protein belongs to the peptidase T1B family. HslV subfamily. As to quaternary structure, a double ring-shaped homohexamer of HslV is capped on each side by a ring-shaped HslU homohexamer. The assembly of the HslU/HslV complex is dependent on binding of ATP.

It is found in the cytoplasm. The catalysed reaction is ATP-dependent cleavage of peptide bonds with broad specificity.. Its activity is regulated as follows. Allosterically activated by HslU binding. Its function is as follows. Protease subunit of a proteasome-like degradation complex believed to be a general protein degrading machinery. The chain is ATP-dependent protease subunit HslV from Zymomonas mobilis subsp. mobilis (strain ATCC 31821 / ZM4 / CP4).